Reading from the N-terminus, the 466-residue chain is FAD-dependent monooxygenase dpfgE (466 aa).

Residues 1 to 23 form the signal peptide; sequence MSQKPFRVIIVGGSVTGLTLAHS. The FAD site is built by Glu35, Gly49, and Arg108. 2 N-linked (GlcNAc...) asparagine glycosylation sites follow: Asn128 and Asn192. Positions 312 and 325 each coordinate FAD. A glycan (N-linked (GlcNAc...) asparagine) is linked at Asn376. The helical transmembrane segment at 443 to 465 threads the bilayer; it reads GVVRNVFFLLAATVIVAWVCRLW.

This sequence belongs to the paxM FAD-dependent monooxygenase family. Requires FAD as cofactor.

Its subcellular location is the membrane. The protein operates within secondary metabolite biosynthesis; terpenoid biosynthesis. Its function is as follows. FAD-dependent monooxygenase; part of the gene cluster that mediates the biosynthesis of diterpenoid pyrones. The first step of the pathway is the synthesis of the alpha-pyrone moiety by the polyketide synthase dpfgA via condensation of one acetyl-CoA starter unit with 3 malonyl-CoA units and 2 methylations. The alpha-pyrone is then combined with geranylgeranyl pyrophosphate (GGPP) formed by the GGPP synthase dpfgD through the action of the prenyltransferase dpfgC to yield a linear alpha-pyrone diterpenoid. Subsequent steps in the diterpenoid pyrone biosynthetic pathway involve the decalin core formation, which is initiated by the epoxidation of the C10-C11 olefin by the FAD-dependent oxidoreductase dpfgE, and is followed by a cyclization cascade catalyzed by the terpene cyclase dpfgB. The short chain dehydrogenase/reductase dpfgG then oxidizes the 8S hydroxy group to a ketone and the short chain dehydrogenase/reductase dpfgH reduces the ketone to the 8R hydroxy group to yield higginsianin B. Higginsianin B is further methylated by the methyltransferase dpfgI to produce the intermediate named FDDP B. The cytochrome P450 monooxygenase dfgpJ then catalyzes a three-step oxidation at C-27 to generate a carboxylic acid as well as C-26 hydroxylation. Finally, methyltransferase dpfgK methylates the carboxylic acid generated by dpfgJ, yielding the final diterpenoid pyrones from the pathway which were named FDDP D and FDDP E. The chain is FAD-dependent monooxygenase dpfgE from Gibberella zeae (strain ATCC MYA-4620 / CBS 123657 / FGSC 9075 / NRRL 31084 / PH-1) (Wheat head blight fungus).